A 244-amino-acid polypeptide reads, in one-letter code: Phosphoadenosine 5'-phosphosulfate reductase (244 aa).

The Nucleophile; cysteine thiosulfonate intermediate role is filled by cysteine 239.

It belongs to the PAPS reductase family. CysH subfamily.

Its subcellular location is the cytoplasm. It carries out the reaction [thioredoxin]-disulfide + sulfite + adenosine 3',5'-bisphosphate + 2 H(+) = [thioredoxin]-dithiol + 3'-phosphoadenylyl sulfate. It functions in the pathway sulfur metabolism; hydrogen sulfide biosynthesis; sulfite from sulfate: step 3/3. Its function is as follows. Catalyzes the formation of sulfite from phosphoadenosine 5'-phosphosulfate (PAPS) using thioredoxin as an electron donor. This Escherichia coli (strain K12 / MC4100 / BW2952) protein is Phosphoadenosine 5'-phosphosulfate reductase.